The following is a 273-amino-acid chain: Mitochondrial distribution and morphology protein 12 (273 aa).

Residues 1–260 (MSFDINWEQL…WPSWINFDFY (260 aa)) enclose the SMP-LTD domain. The disordered stretch occupies residues 76 to 98 (MSAEEETEGSDDEGYGGDRVRNR). Acidic residues predominate over residues 78–90 (AEEETEGSDDEGY).

It belongs to the MDM12 family. In terms of assembly, component of the ER-mitochondria encounter structure (ERMES) or MDM complex, composed of MMM1, MDM10, MDM12 and MDM34. An MMM1 homodimer associates with one molecule of MDM12 on each side in a pairwise head-to-tail manner, and the SMP-LTD domains of MMM1 and MDM12 generate a continuous hydrophobic tunnel for phospholipid trafficking.

The protein resides in the mitochondrion outer membrane. Its subcellular location is the endoplasmic reticulum membrane. Component of the ERMES/MDM complex, which serves as a molecular tether to connect the endoplasmic reticulum (ER) and mitochondria. Components of this complex are involved in the control of mitochondrial shape and protein biogenesis, and function in nonvesicular lipid trafficking between the ER and mitochondria. MDM12 is required for the interaction of the ER-resident membrane protein MMM1 and the outer mitochondrial membrane-resident beta-barrel protein MDM10. The MDM12-MMM1 subcomplex functions in the major beta-barrel assembly pathway that is responsible for biogenesis of all mitochondrial outer membrane beta-barrel proteins, and acts in a late step after the SAM complex. The MDM10-MDM12-MMM1 subcomplex further acts in the TOM40-specific pathway after the action of the MDM12-MMM1 complex. Essential for establishing and maintaining the structure of mitochondria and maintenance of mtDNA nucleoids. The protein is Mitochondrial distribution and morphology protein 12 of Vanderwaltozyma polyspora (strain ATCC 22028 / DSM 70294 / BCRC 21397 / CBS 2163 / NBRC 10782 / NRRL Y-8283 / UCD 57-17) (Kluyveromyces polysporus).